The sequence spans 156 residues: Transcriptional repressor NrdR (156 aa).

A zinc finger lies at 3–34 (CPSCQFNGTRVVDSRPVDDNKEIRRRRECESC). Residues 49 to 139 (LVVVKKEGSR…VYRQFKDINV (91 aa)) form the ATP-cone domain.

This sequence belongs to the NrdR family. Requires Zn(2+) as cofactor.

Its function is as follows. Negatively regulates transcription of bacterial ribonucleotide reductase nrd genes and operons by binding to NrdR-boxes. The polypeptide is Transcriptional repressor NrdR (Lysinibacillus sphaericus (strain C3-41)).